Consider the following 186-residue polypeptide: Ribosome-recycling factor (186 aa).

This sequence belongs to the RRF family.

The protein resides in the cytoplasm. Responsible for the release of ribosomes from messenger RNA at the termination of protein biosynthesis. May increase the efficiency of translation by recycling ribosomes from one round of translation to another. This chain is Ribosome-recycling factor, found in Herminiimonas arsenicoxydans.